A 105-amino-acid chain; its full sequence is MSISTQITFFEFLTPLVASGQKTITIRDKSESHYVPGTRVEVFTLETQRKVCEIDILAVEPLKFDEINEFHAEQEAIELPKLKALIQEIYPNIDELYVITYQLAK.

An ASCH domain is found at 8-93 (TFFEFLTPLV…ALIQEIYPNI (86 aa)). The active-site Proton acceptor is the lysine 22. The active-site Nucleophile is threonine 25. Glutamate 75 functions as the Proton donor in the catalytic mechanism.

It belongs to the N(4)-acetylcytidine amidohydrolase family.

It catalyses the reaction N(4)-acetylcytidine + H2O = cytidine + acetate + H(+). It carries out the reaction N(4)-acetyl-2'-deoxycytidine + H2O = 2'-deoxycytidine + acetate + H(+). The enzyme catalyses N(4)-acetylcytosine + H2O = cytosine + acetate + H(+). Catalyzes the hydrolysis of N(4)-acetylcytidine (ac4C). The polypeptide is N(4)-acetylcytidine amidohydrolase (Vibrio cholerae serotype O1 (strain ATCC 39315 / El Tor Inaba N16961)).